Here is a 181-residue protein sequence, read N- to C-terminus: Large ribosomal subunit protein uL5 (181 aa).

This sequence belongs to the universal ribosomal protein uL5 family. Part of the 50S ribosomal subunit; part of the 5S rRNA/L5/L18/L25 subcomplex. Contacts the 5S rRNA and the P site tRNA. Forms a bridge to the 30S subunit in the 70S ribosome.

This is one of the proteins that bind and probably mediate the attachment of the 5S RNA into the large ribosomal subunit, where it forms part of the central protuberance. In the 70S ribosome it contacts protein S13 of the 30S subunit (bridge B1b), connecting the 2 subunits; this bridge is implicated in subunit movement. Contacts the P site tRNA; the 5S rRNA and some of its associated proteins might help stabilize positioning of ribosome-bound tRNAs. The chain is Large ribosomal subunit protein uL5 from Onion yellows phytoplasma (strain OY-M).